Reading from the N-terminus, the 209-residue chain is Uracil phosphoribosyltransferase (209 aa).

5-phospho-alpha-D-ribose 1-diphosphate contacts are provided by residues Arg-79, Arg-104, and 131 to 139 (DPMLATGGS). Residues Ile-194 and 199–201 (GDA) each bind uracil. 5-phospho-alpha-D-ribose 1-diphosphate is bound at residue Asp-200.

It belongs to the UPRTase family. The cofactor is Mg(2+).

It catalyses the reaction UMP + diphosphate = 5-phospho-alpha-D-ribose 1-diphosphate + uracil. It functions in the pathway pyrimidine metabolism; UMP biosynthesis via salvage pathway; UMP from uracil: step 1/1. Its activity is regulated as follows. Allosterically activated by GTP. Catalyzes the conversion of uracil and 5-phospho-alpha-D-ribose 1-diphosphate (PRPP) to UMP and diphosphate. This is Uracil phosphoribosyltransferase from Streptococcus suis (strain 05ZYH33).